Here is a 94-residue protein sequence, read N- to C-terminus: Pyrimidine/purine nucleoside phosphorylase (94 aa).

It belongs to the nucleoside phosphorylase PpnP family.

The enzyme catalyses a purine D-ribonucleoside + phosphate = a purine nucleobase + alpha-D-ribose 1-phosphate. It catalyses the reaction adenosine + phosphate = alpha-D-ribose 1-phosphate + adenine. The catalysed reaction is cytidine + phosphate = cytosine + alpha-D-ribose 1-phosphate. It carries out the reaction guanosine + phosphate = alpha-D-ribose 1-phosphate + guanine. The enzyme catalyses inosine + phosphate = alpha-D-ribose 1-phosphate + hypoxanthine. It catalyses the reaction thymidine + phosphate = 2-deoxy-alpha-D-ribose 1-phosphate + thymine. The catalysed reaction is uridine + phosphate = alpha-D-ribose 1-phosphate + uracil. It carries out the reaction xanthosine + phosphate = alpha-D-ribose 1-phosphate + xanthine. Functionally, catalyzes the phosphorolysis of diverse nucleosides, yielding D-ribose 1-phosphate and the respective free bases. Can use uridine, adenosine, guanosine, cytidine, thymidine, inosine and xanthosine as substrates. Also catalyzes the reverse reactions. In Pectobacterium carotovorum subsp. carotovorum (strain PC1), this protein is Pyrimidine/purine nucleoside phosphorylase.